A 378-amino-acid polypeptide reads, in one-letter code: Chitinase (378 aa).

Residues methionine 1–glycine 28 form the signal peptide. In terms of domain architecture, GH18 spans glycine 53–histidine 378. Catalysis depends on glutamate 174, which acts as the Proton donor. Cysteines 220 and 230 form a disulfide.

It belongs to the glycosyl hydrolase 18 family. Forms a hetero-multimeric, high molecular weight complex composed of at least CHT1, SOAP AND WARP. Within the complex, may interact with WARP via a disulfide bond.

The protein resides in the secreted. Its subcellular location is the cytoplasmic vesicle. The protein localises to the secretory vesicle. It is found in the microneme. The enzyme catalyses Random endo-hydrolysis of N-acetyl-beta-D-glucosaminide (1-&gt;4)-beta-linkages in chitin and chitodextrins.. Inhibited by allosamidin. In terms of biological role, endochitinase that cleaves beta-1,4-linkages between tri- and tetramers of N-acetylglucosamine (GlcNAc) from penta- and hexameric chitin oligomers. Does not cleave smaller chitin oligosaccharides. Required to cross the acellular, chitin-containing peritrophic matrix (PM) which is formed around the ingested blood meal in the mosquito midgut allowing the ookinete to invade the mosquito gut epithelium. This Plasmodium falciparum (isolate 3D7) protein is Chitinase.